Reading from the N-terminus, the 420-residue chain is Cysteate-C-fatty acyltransferase (420 aa).

Pyridoxal 5'-phosphate is bound by residues 114 to 115 (GY), H219, T247, and A249. At K250 the chain carries N6-(pyridoxal phosphate)lysine.

The protein belongs to the class-II pyridoxal-phosphate-dependent aminotransferase family. The cofactor is pyridoxal 5'-phosphate.

The enzyme catalyses isopentadecanoyl-CoA + L-cysteate + H(+) = 3-oxocapnine + CO2 + CoA. It participates in lipid metabolism. Functionally, transferase involved in the biosynthesis of capnine, a sulfonolipid present in the outer membrane of gliding Bacteroidetes and essential for gliding motility. Catalyzes the formation of 3-dehydrocapnine from cysteate and isopentadecanoyl-CoA (13-methyl-myristoyl-CoA). In vitro, products are also detected when 13-methyl-myristic acid is substituted with tridecylic acid, myristic acid, pentadecanoic acid or palmitic acid. The sequence is that of Cysteate-C-fatty acyltransferase from Capnocytophaga ochracea (strain ATCC 27872 / DSM 7271 / CCUG 9716 / JCM 12966 / NCTC 12371 / SS31 / VPI 2845) (Bacteroides ochraceus).